The following is an 876-amino-acid chain: Beta-glucosidase 1 (876 aa).

An N-terminal signal peptide occupies residues methionine 1–alanine 17. N-linked (GlcNAc...) asparagine glycosylation is found at asparagine 22, asparagine 75, asparagine 224, and asparagine 267. Aspartate 295 is a catalytic residue. Asparagine 332, asparagine 339, asparagine 372, asparagine 389, asparagine 426, asparagine 544, asparagine 585, asparagine 739, asparagine 780, and asparagine 790 each carry an N-linked (GlcNAc...) asparagine glycan.

Belongs to the glycosyl hydrolase 3 family.

It carries out the reaction Hydrolysis of terminal, non-reducing beta-D-glucosyl residues with release of beta-D-glucose.. It participates in glycan metabolism; cellulose degradation. The polypeptide is Beta-glucosidase 1 (BGL1) (Saccharomycopsis fibuligera (Yeast)).